The sequence spans 341 residues: Holliday junction branch migration complex subunit RuvB (341 aa).

Positions 1-182 are large ATPase domain (RuvB-L); the sequence is MTSSDPTLRP…FGIPTRLQFY (182 aa). Residues Leu-21, Arg-22, Gly-63, Lys-66, Thr-67, Thr-68, 129–131, Arg-172, Tyr-182, and Arg-219 each bind ATP; that span reads EDF. Thr-67 contributes to the Mg(2+) binding site. The segment at 183–253 is small ATPAse domain (RuvB-S); sequence TEDELDLIVA…IADRALTRLG (71 aa). The head domain (RuvB-H) stretch occupies residues 256–341; that stretch reads HLGLDLGDRR…KGPGQSDLFG (86 aa). Arg-292, Arg-311, and Arg-316 together coordinate DNA.

This sequence belongs to the RuvB family. In terms of assembly, homohexamer. Forms an RuvA(8)-RuvB(12)-Holliday junction (HJ) complex. HJ DNA is sandwiched between 2 RuvA tetramers; dsDNA enters through RuvA and exits via RuvB. An RuvB hexamer assembles on each DNA strand where it exits the tetramer. Each RuvB hexamer is contacted by two RuvA subunits (via domain III) on 2 adjacent RuvB subunits; this complex drives branch migration. In the full resolvosome a probable DNA-RuvA(4)-RuvB(12)-RuvC(2) complex forms which resolves the HJ.

Its subcellular location is the cytoplasm. It carries out the reaction ATP + H2O = ADP + phosphate + H(+). In terms of biological role, the RuvA-RuvB-RuvC complex processes Holliday junction (HJ) DNA during genetic recombination and DNA repair, while the RuvA-RuvB complex plays an important role in the rescue of blocked DNA replication forks via replication fork reversal (RFR). RuvA specifically binds to HJ cruciform DNA, conferring on it an open structure. The RuvB hexamer acts as an ATP-dependent pump, pulling dsDNA into and through the RuvAB complex. RuvB forms 2 homohexamers on either side of HJ DNA bound by 1 or 2 RuvA tetramers; 4 subunits per hexamer contact DNA at a time. Coordinated motions by a converter formed by DNA-disengaged RuvB subunits stimulates ATP hydrolysis and nucleotide exchange. Immobilization of the converter enables RuvB to convert the ATP-contained energy into a lever motion, pulling 2 nucleotides of DNA out of the RuvA tetramer per ATP hydrolyzed, thus driving DNA branch migration. The RuvB motors rotate together with the DNA substrate, which together with the progressing nucleotide cycle form the mechanistic basis for DNA recombination by continuous HJ branch migration. Branch migration allows RuvC to scan DNA until it finds its consensus sequence, where it cleaves and resolves cruciform DNA. The sequence is that of Holliday junction branch migration complex subunit RuvB from Cereibacter sphaeroides (strain ATCC 17029 / ATH 2.4.9) (Rhodobacter sphaeroides).